We begin with the raw amino-acid sequence, 184 residues long: Peptidyl-tRNA hydrolase (184 aa).

Position 17 (Tyr17) interacts with tRNA. Catalysis depends on His22, which acts as the Proton acceptor. The tRNA site is built by Phe71, Asn73, and Asn119.

This sequence belongs to the PTH family. Monomer.

The protein localises to the cytoplasm. It catalyses the reaction an N-acyl-L-alpha-aminoacyl-tRNA + H2O = an N-acyl-L-amino acid + a tRNA + H(+). Its function is as follows. Hydrolyzes ribosome-free peptidyl-tRNAs (with 1 or more amino acids incorporated), which drop off the ribosome during protein synthesis, or as a result of ribosome stalling. In terms of biological role, catalyzes the release of premature peptidyl moieties from peptidyl-tRNA molecules trapped in stalled 50S ribosomal subunits, and thus maintains levels of free tRNAs and 50S ribosomes. In Corynebacterium diphtheriae (strain ATCC 700971 / NCTC 13129 / Biotype gravis), this protein is Peptidyl-tRNA hydrolase.